Reading from the N-terminus, the 540-residue chain is MLO protein homolog 1 (540 aa).

Over 1-16 (MAGGRSGSRELPETPT) the chain is Extracellular. Residues 17-37 (WAVAVVCAVLVLVSVAMEHGL) form a helical membrane-spanning segment. The Cytoplasmic portion of the chain corresponds to 38-60 (HNLSHWFRRRQKKAMGDALDKIK). The chain crosses the membrane as a helical span at residues 61–81 (AELMLLGFISLLLTVAQAPIS). Residues 82 to 142 (KICIPKSAAN…MSAKSMHQLH (61 aa)) lie on the Extracellular side of the membrane. The chain crosses the membrane as a helical span at residues 143–163 (IFIFVLAVFHVTYCVITMGLG). The Cytoplasmic portion of the chain corresponds to 164–265 (RLKMKKWKKW…IKRSLEDDFK (102 aa)). A helical membrane pass occupies residues 266-286 (VVVGISLPLWFVGILVLFLDI). Position 287 (His-287) is a topological domain, extracellular. Residues 288 to 308 (GLGTLIWISFVPLIIVLLVGT) form a helical membrane-spanning segment. The Cytoplasmic portion of the chain corresponds to 309–347 (KLEMVIMQMAQEIQDRATVIQGAPVVEPSNKYFWFNRPD). Residues 348-368 (WVLFFIHLTLFHNAFQMAHFV) form a helical membrane-spanning segment. Over 369 to 383 (WTMATPGLKKCFHEN) the chain is Extracellular. The helical transmembrane segment at 384–404 (IWLSIVEVIVGISLQVLCSYI) threads the bilayer. The Cytoplasmic segment spans residues 405-540 (TFPLYALVTQ…DSDFSFSAQR (136 aa)). The segment at 426 to 447 (EQTMKALMNWRKKAMEKKKVRD) is calmodulin-binding. The tract at residues 468 to 526 (ASPVHLLQDHRARSDDPPSPITVASPPAPEEDIYPVPAAAASRQLLDDPPDRRWMASSS) is disordered. 2 stretches are compositionally biased toward basic and acidic residues: residues 474–483 (LQDHRARSDD) and 512–521 (LLDDPPDRRW).

This sequence belongs to the MLO family.

The protein localises to the membrane. Functionally, may be involved in modulation of pathogen defense and leaf cell death. Activity seems to be regulated by Ca(2+)-dependent calmodulin binding and seems not to require heterotrimeric G proteins. This is MLO protein homolog 1 (MLO1) from Oryza sativa subsp. japonica (Rice).